We begin with the raw amino-acid sequence, 205 residues long: ATP phosphoribosyltransferase (205 aa).

Belongs to the ATP phosphoribosyltransferase family. Short subfamily. Heteromultimer composed of HisG and HisZ subunits.

It is found in the cytoplasm. It catalyses the reaction 1-(5-phospho-beta-D-ribosyl)-ATP + diphosphate = 5-phospho-alpha-D-ribose 1-diphosphate + ATP. It participates in amino-acid biosynthesis; L-histidine biosynthesis; L-histidine from 5-phospho-alpha-D-ribose 1-diphosphate: step 1/9. In terms of biological role, catalyzes the condensation of ATP and 5-phosphoribose 1-diphosphate to form N'-(5'-phosphoribosyl)-ATP (PR-ATP). Has a crucial role in the pathway because the rate of histidine biosynthesis seems to be controlled primarily by regulation of HisG enzymatic activity. The chain is ATP phosphoribosyltransferase from Staphylococcus saprophyticus subsp. saprophyticus (strain ATCC 15305 / DSM 20229 / NCIMB 8711 / NCTC 7292 / S-41).